Consider the following 81-residue polypeptide: Cytoplasmic envelopment protein 3 (81 aa).

G2 carries N-myristoyl glycine; by host lipidation. The Di-leucine-like internalization motif motif lies at 22-23; sequence LV. The asp/Glu-rich (acidic) stretch occupies residues 41-47; sequence DFDENVT. The disordered stretch occupies residues 47-81; the sequence is TEDADKSTQRRPRVIDVTPKRKPSGKSSHSKCAKC. The segment covering 66 to 81 has biased composition (basic residues); sequence KRKPSGKSSHSKCAKC.

Belongs to the herpesviridae cytoplasmic envelopment protein 3 family. Interacts with cytoplasmic envelopment protein 2; this interaction is essential for the proper localization of each protein to the assembly complex and thus for the production of infectious virus. In terms of processing, myristoylation and palmitoylation (probably on one or more of the nearby cysteines at the N-terminus) enable membrane-binding and Golgi apparatus-specific targeting and are essential for efficient packaging. Phosphorylated. Phosphorylation does not seem to be required for recycling to the host Golgi apparatus. Packaging is selective for underphosphorylated forms.

It localises to the virion tegument. The protein localises to the virion membrane. It is found in the host cell membrane. The protein resides in the host Golgi apparatus membrane. Its function is as follows. Plays an important role in the cytoplasmic envelopment of tegument proteins and capsids during the assembly and egress processes. Also participates in viral entry at the fusion step probably by regulating the core fusion machinery. The polypeptide is Cytoplasmic envelopment protein 3 (Homo sapiens (Human)).